Reading from the N-terminus, the 875-residue chain is Alanine--tRNA ligase (875 aa).

Zn(2+) contacts are provided by His565, His569, Cys666, and His670.

This sequence belongs to the class-II aminoacyl-tRNA synthetase family. Requires Zn(2+) as cofactor.

It is found in the cytoplasm. It catalyses the reaction tRNA(Ala) + L-alanine + ATP = L-alanyl-tRNA(Ala) + AMP + diphosphate. In terms of biological role, catalyzes the attachment of alanine to tRNA(Ala) in a two-step reaction: alanine is first activated by ATP to form Ala-AMP and then transferred to the acceptor end of tRNA(Ala). Also edits incorrectly charged Ser-tRNA(Ala) and Gly-tRNA(Ala) via its editing domain. This Leptothrix cholodnii (strain ATCC 51168 / LMG 8142 / SP-6) (Leptothrix discophora (strain SP-6)) protein is Alanine--tRNA ligase.